Consider the following 201-residue polypeptide: LexA repressor (201 aa).

The segment at residues 28–48 is a DNA-binding region (H-T-H motif); it reads LREIAAKLGISGTLGVMKHLE. Active-site for autocatalytic cleavage activity residues include serine 120 and lysine 157.

Belongs to the peptidase S24 family. In terms of assembly, homodimer.

It catalyses the reaction Hydrolysis of Ala-|-Gly bond in repressor LexA.. Its function is as follows. Represses a number of genes involved in the response to DNA damage (SOS response), including recA and lexA. In the presence of single-stranded DNA, RecA interacts with LexA causing an autocatalytic cleavage which disrupts the DNA-binding part of LexA, leading to derepression of the SOS regulon and eventually DNA repair. This chain is LexA repressor, found in Geobacter sp. (strain M21).